Reading from the N-terminus, the 143-residue chain is Submaxillary gland androgen-regulated protein 2, isoform delta (143 aa).

Residues 1-22 (MKPLCLVFGLCVLIGCFLSSEC) form the signal peptide. Disordered regions lie at residues 28 to 52 (GQHD…PDPN) and 116 to 143 (VPRK…TDSF). 2 stretches are compositionally biased toward polar residues: residues 36–45 (LSPSNPSSHF) and 122–143 (NATP…TDSF).

It localises to the secreted. In terms of biological role, may play a role in protection or detoxification. This Mus musculus (Mouse) protein is Submaxillary gland androgen-regulated protein 2, isoform delta (Smr2).